Consider the following 413-residue polypeptide: Tyrosine--tRNA ligase 2 (413 aa).

A 'HIGH' region motif is present at residues 58 to 67 (PSAPDVHLGH). 2 consecutive repeat copies span residues 89-94 (GDFTGK) and 96-101 (GDPTGK). The segment at 89–101 (GDFTGKIGDPTGK) is 2 X 6 AA tandem repeats. The 'KMSKS' region signature appears at 242-246 (KMSKS). Lys-245 provides a ligand contact to ATP. An S4 RNA-binding domain is found at 353–413 (IAMIDLLVKL…VGKRKFLKLQ (61 aa)).

This sequence belongs to the class-I aminoacyl-tRNA synthetase family. TyrS type 2 subfamily. Homodimer.

It is found in the cytoplasm. It carries out the reaction tRNA(Tyr) + L-tyrosine + ATP = L-tyrosyl-tRNA(Tyr) + AMP + diphosphate + H(+). Its function is as follows. Catalyzes the attachment of tyrosine to tRNA(Tyr) in a two-step reaction: tyrosine is first activated by ATP to form Tyr-AMP and then transferred to the acceptor end of tRNA(Tyr). In Bacillus subtilis (strain 168), this protein is Tyrosine--tRNA ligase 2.